Reading from the N-terminus, the 258-residue chain is uncharacterized protein (258 aa).

This is an uncharacterized protein from Methanocaldococcus jannaschii (strain ATCC 43067 / DSM 2661 / JAL-1 / JCM 10045 / NBRC 100440) (Methanococcus jannaschii).